We begin with the raw amino-acid sequence, 177 residues long: ADP-ribose 1''-phosphate phosphatase (177 aa).

The Macro domain maps to 1-177 (MSNITYVKGN…GDMSFTVYQL (177 aa)). Substrate-binding positions include 9–11 (GNI), 24–26 (SCN), 31–36 (WGGGIA), and 147–153 (INSGIFG).

Belongs to the POA1 family.

The enzyme catalyses ADP-alpha-D-ribose 1''-phosphate + H2O = ADP-D-ribose + phosphate. Highly specific phosphatase involved in the metabolism of ADP-ribose 1''-phosphate (Appr1p) which is produced as a consequence of tRNA splicing. Removes ADP-ribose from glutamate residues in proteins bearing a single ADP-ribose moiety. Inactive towards proteins bearing poly-ADP-ribose. In Saccharomyces cerevisiae (strain YJM789) (Baker's yeast), this protein is ADP-ribose 1''-phosphate phosphatase (POA1).